A 231-amino-acid chain; its full sequence is MGCVSSCFRVEDIDEYMNPNSSVYRNCPCIRCLAHNFLNLYISVFRRGETRSLPSSVQATASITSSSSHDNFLSEAFRSTPRPLPYDADPRYFRSLVSRREKGSSHSHEEVEPLRSDSDADSESFGVGGCKWANNKSTLSDKDSKEEYSSKSSLRILRSRSKSIMADSENMYILSEDEDVCPTCLEEYTSENPKIVTKCSHHFHLSCIYEWMERSENCPVCGKVMEFNETP.

Basic and acidic residues predominate over residues 103-118 (GSSHSHEEVEPLRSDS). The interval 103–125 (GSSHSHEEVEPLRSDSDADSESF) is disordered. The segment at 181 to 222 (CPTCLEEYTSENPKIVTKCSHHFHLSCIYEWMERSENCPVCG) adopts an RING-type; atypical zinc-finger fold.

Its subcellular location is the cytoplasm. The enzyme catalyses S-ubiquitinyl-[E2 ubiquitin-conjugating enzyme]-L-cysteine + [acceptor protein]-L-lysine = [E2 ubiquitin-conjugating enzyme]-L-cysteine + N(6)-ubiquitinyl-[acceptor protein]-L-lysine.. Its pathway is protein modification; protein ubiquitination. Mediates E2-dependent protein ubiquitination. The polypeptide is E3 ubiquitin-protein ligase At3g02290 (Arabidopsis thaliana (Mouse-ear cress)).